The sequence spans 434 residues: Glutamyl-tRNA reductase (434 aa).

Residues 49-52 (TCNR), S109, 114-116 (EPQ), and Q120 contribute to the substrate site. C50 serves as the catalytic Nucleophile. 189 to 194 (GAGEMC) contacts NADP(+).

The protein belongs to the glutamyl-tRNA reductase family. Homodimer.

It catalyses the reaction (S)-4-amino-5-oxopentanoate + tRNA(Glu) + NADP(+) = L-glutamyl-tRNA(Glu) + NADPH + H(+). Its pathway is porphyrin-containing compound metabolism; protoporphyrin-IX biosynthesis; 5-aminolevulinate from L-glutamyl-tRNA(Glu): step 1/2. Catalyzes the NADPH-dependent reduction of glutamyl-tRNA(Glu) to glutamate 1-semialdehyde (GSA). In Geotalea daltonii (strain DSM 22248 / JCM 15807 / FRC-32) (Geobacter daltonii), this protein is Glutamyl-tRNA reductase.